The following is a 146-amino-acid chain: Large ribosomal subunit protein uL13 (146 aa).

Belongs to the universal ribosomal protein uL13 family. Part of the 50S ribosomal subunit.

Its function is as follows. This protein is one of the early assembly proteins of the 50S ribosomal subunit, although it is not seen to bind rRNA by itself. It is important during the early stages of 50S assembly. This chain is Large ribosomal subunit protein uL13, found in Methylobacillus flagellatus (strain ATCC 51484 / DSM 6875 / VKM B-1610 / KT).